A 213-amino-acid polypeptide reads, in one-letter code: Pyridoxine/pyridoxamine 5'-phosphate oxidase (213 aa).

Substrate is bound by residues 8-11 (RQEY) and Lys66. FMN-binding positions include 61 to 66 (RTVLLK), 76 to 77 (YT), Arg82, Lys83, and Gln105. Residues Tyr123, Arg127, and Ser131 each contribute to the substrate site. Residues 140–141 (QS) and Trp185 contribute to the FMN site. 191–193 (RLH) contributes to the substrate binding site. Arg195 provides a ligand contact to FMN.

Belongs to the pyridoxamine 5'-phosphate oxidase family. Homodimer. FMN is required as a cofactor.

It carries out the reaction pyridoxamine 5'-phosphate + O2 + H2O = pyridoxal 5'-phosphate + H2O2 + NH4(+). It catalyses the reaction pyridoxine 5'-phosphate + O2 = pyridoxal 5'-phosphate + H2O2. It participates in cofactor metabolism; pyridoxal 5'-phosphate salvage; pyridoxal 5'-phosphate from pyridoxamine 5'-phosphate: step 1/1. Its pathway is cofactor metabolism; pyridoxal 5'-phosphate salvage; pyridoxal 5'-phosphate from pyridoxine 5'-phosphate: step 1/1. Functionally, catalyzes the oxidation of either pyridoxine 5'-phosphate (PNP) or pyridoxamine 5'-phosphate (PMP) into pyridoxal 5'-phosphate (PLP). This is Pyridoxine/pyridoxamine 5'-phosphate oxidase from Bacteroides thetaiotaomicron (strain ATCC 29148 / DSM 2079 / JCM 5827 / CCUG 10774 / NCTC 10582 / VPI-5482 / E50).